The sequence spans 225 residues: Ribulose-phosphate 3-epimerase (225 aa).

Serine 10 serves as a coordination point for substrate. A divalent metal cation-binding residues include histidine 35, aspartate 37, and histidine 68. Aspartate 37 acts as the Proton acceptor in catalysis. Substrate is bound by residues histidine 68, 144 to 147 (GFGG), and 175 to 177 (DGG). Aspartate 175 provides a ligand contact to a divalent metal cation. Catalysis depends on aspartate 175, which acts as the Proton donor.

The protein belongs to the ribulose-phosphate 3-epimerase family. It depends on a divalent metal cation as a cofactor.

It catalyses the reaction D-ribulose 5-phosphate = D-xylulose 5-phosphate. The protein operates within carbohydrate degradation. Catalyzes the reversible epimerization of D-ribulose 5-phosphate to D-xylulose 5-phosphate. This is Ribulose-phosphate 3-epimerase from Rhodospirillum rubrum.